The chain runs to 1324 residues: Tetratricopeptide repeat protein 21 homolog (1324 aa).

TPR repeat units lie at residues 58-91, 414-446, 582-615, 669-702, 737-770, 772-804, 806-837, 847-880, 894-927, 929-961, 963-995, 997-1029, 1033-1066, 1205-1238, 1240-1272, and 1274-1307; these read PALA…NDVA, SPLY…LVEM, SLYH…PRKE, DQLV…QSNF, PGSY…QSKD, QLAE…YKDK, MRLK…DPEP, IQFL…HSRI, ARIC…HETD, KANL…DPHN, EANS…NPQH, HALS…NPRC, SGYN…AAGW, EKCW…NCNC, KAFE…TKER, and PGFG…NPQY.

The protein belongs to the TTC21 family. Component of the IFT complex A (IFT-A) composed of at least che-11, daf-10, dyf-2, ift-139, ift-43 and ifta-1. Expressed in ciliated sensory neurons in the head and tail.

It is found in the cell projection. The protein localises to the cilium. Its subcellular location is the cytoplasm. The protein resides in the cytoskeleton. It localises to the cilium basal body. It is found in the dendrite. Functionally, component of the IFT complex A (IFT-A), a complex required for retrograde ciliary transport. In particular, may act redundantly with the intraflagellar transport protein ift-43 to regulate the transport of specific ciliary cargo proteins such as che-3 which are related to motility. Functions in cilia biogenesis. This chain is Tetratricopeptide repeat protein 21 homolog, found in Caenorhabditis elegans.